Reading from the N-terminus, the 341-residue chain is UDP-3-O-(3-hydroxymyristoyl)glucosamine N-acyltransferase (341 aa).

His239 serves as the catalytic Proton acceptor.

It belongs to the transferase hexapeptide repeat family. LpxD subfamily. In terms of assembly, homotrimer.

It catalyses the reaction a UDP-3-O-[(3R)-3-hydroxyacyl]-alpha-D-glucosamine + a (3R)-hydroxyacyl-[ACP] = a UDP-2-N,3-O-bis[(3R)-3-hydroxyacyl]-alpha-D-glucosamine + holo-[ACP] + H(+). It carries out the reaction UDP-3-O-[(3R)-3-hydroxytetradecanoyl]-alpha-D-glucosamine + (3R)-hydroxytetradecanoyl-[ACP] = UDP-2-N,3-O-bis[(3R)-3-hydroxytetradecanoyl]-alpha-D-glucosamine + holo-[ACP] + H(+). It participates in glycolipid biosynthesis; lipid IV(A) biosynthesis; lipid IV(A) from (3R)-3-hydroxytetradecanoyl-[acyl-carrier-protein] and UDP-N-acetyl-alpha-D-glucosamine: step 3/6. Catalyzes the N-acylation of UDP-3-O-(hydroxytetradecanoyl)glucosamine using 3-hydroxytetradecanoyl-ACP as the acyl donor. Is involved in the biosynthesis of lipid A, a phosphorylated glycolipid that anchors the lipopolysaccharide to the outer membrane of the cell. This chain is UDP-3-O-(3-hydroxymyristoyl)glucosamine N-acyltransferase, found in Escherichia coli O157:H7.